A 161-amino-acid chain; its full sequence is Ribonuclease P protein component 2 (161 aa).

This sequence belongs to the eukaryotic/archaeal RNase P protein component 2 family. Consists of a catalytic RNA component and at least 4-5 protein subunits.

The protein resides in the cytoplasm. The catalysed reaction is Endonucleolytic cleavage of RNA, removing 5'-extranucleotides from tRNA precursor.. Its function is as follows. Part of ribonuclease P, a protein complex that generates mature tRNA molecules by cleaving their 5'-ends. This chain is Ribonuclease P protein component 2, found in Natronomonas pharaonis (strain ATCC 35678 / DSM 2160 / CIP 103997 / JCM 8858 / NBRC 14720 / NCIMB 2260 / Gabara) (Halobacterium pharaonis).